The primary structure comprises 83 residues: Retinal cone rhodopsin-sensitive cGMP 3',5'-cyclic phosphodiesterase subunit gamma (83 aa).

Polar residues predominate over residues 1 to 17 (MSDNTVLAPPTSNQGPT). The disordered stretch occupies residues 1 to 51 (MSDNTVLAPPTSNQGPTTPRKGPPKFKQRQTRQFKSKPPKKGVKGFGDDIP). Basic residues predominate over residues 22–43 (GPPKFKQRQTRQFKSKPPKKGV).

This sequence belongs to the rod/cone cGMP-PDE gamma subunit family. As to quaternary structure, tetramer composed of two catalytic chains (alpha and beta), and two inhibitory chains (gamma).

The enzyme catalyses 3',5'-cyclic GMP + H2O = GMP + H(+). Participates in processes of transmission and amplification of the visual signal. cGMP-PDEs are the effector molecules in G-protein-mediated phototransduction in vertebrate rods and cones. The protein is Retinal cone rhodopsin-sensitive cGMP 3',5'-cyclic phosphodiesterase subunit gamma (PDE6H) of Bos taurus (Bovine).